Consider the following 245-residue polypeptide: Leucyl/phenylalanyl-tRNA--protein transferase (245 aa).

It belongs to the L/F-transferase family.

It localises to the cytoplasm. It carries out the reaction N-terminal L-lysyl-[protein] + L-leucyl-tRNA(Leu) = N-terminal L-leucyl-L-lysyl-[protein] + tRNA(Leu) + H(+). The enzyme catalyses N-terminal L-arginyl-[protein] + L-leucyl-tRNA(Leu) = N-terminal L-leucyl-L-arginyl-[protein] + tRNA(Leu) + H(+). It catalyses the reaction L-phenylalanyl-tRNA(Phe) + an N-terminal L-alpha-aminoacyl-[protein] = an N-terminal L-phenylalanyl-L-alpha-aminoacyl-[protein] + tRNA(Phe). Its function is as follows. Functions in the N-end rule pathway of protein degradation where it conjugates Leu, Phe and, less efficiently, Met from aminoacyl-tRNAs to the N-termini of proteins containing an N-terminal arginine or lysine. The sequence is that of Leucyl/phenylalanyl-tRNA--protein transferase from Paraburkholderia phymatum (strain DSM 17167 / CIP 108236 / LMG 21445 / STM815) (Burkholderia phymatum).